Reading from the N-terminus, the 4538-residue chain is Polyketide synthase PksL (4538 aa).

Residues 1 to 123 (MRWRSNVKKI…ADMHADSPAI (123 aa)) form an N-terminal hotdog fold 1 region. A PKS/mFAS DH 1 domain is found at 1-285 (MRWRSNVKKI…SKLVREAELI (285 aa)). The active-site Proton acceptor; for dehydratase activity 1 is the His-26. Residues 138–285 (QNVVQLDDVY…SKLVREAELI (148 aa)) are C-terminal hotdog fold 1. The active-site Proton donor; for dehydratase activity 1 is the Asp-199. Positions 289 to 314 (HQDAQETQMTRADTAERDKPADMVSS) are disordered. The Carrier 1 domain maps to 320-394 (SEAEQFVSQL…ELSAFLAEEY (75 aa)). Ser-354 is modified (O-(pantetheine 4'-phosphoryl)serine). Residues 433–871 (AGDIAIIGLA…GSNAHIILEE (439 aa)) enclose the Ketosynthase family 3 (KS3) 1 domain. Active-site for beta-ketoacyl synthase 1 activity residues include Cys-609, His-744, and His-784. Positions 1048–1226 (HILHPLLHQN…DSLYAGENGV (179 aa)) are dehydratase. The segment at 1051-1175 (HPLLHQNVSD…GSAVLCEAGE (125 aa)) is N-terminal hotdog fold 2. In terms of domain architecture, PKS/mFAS DH 2 spans 1051 to 1340 (HPLLHQNVSD…ARVLETDQEG (290 aa)). Residue His-1080 is the Proton acceptor; for dehydratase activity 2 of the active site. The interval 1189-1340 (NGRTLSPFDC…ARVLETDQEG (152 aa)) is C-terminal hotdog fold 2. Asp-1251 functions as the Proton donor; for dehydratase activity 2 in the catalytic mechanism. The beta-ketoacyl reductase 1 stretch occupies residues 1520 to 1713 (KGVYLITGGA…WKDGGMQIDA (194 aa)). The Carrier 2 domain maps to 1800–1873 (EKAENYFKQV…SLTRYFIDSR (74 aa)). Position 1834 is an O-(pantetheine 4'-phosphoryl)serine (Ser-1834). The 440-residue stretch at 1926–2365 (TEEIAIIGIS…GVNAHILIEE (440 aa)) folds into the Ketosynthase family 3 (KS3) 2 domain. Catalysis depends on for beta-ketoacyl synthase 2 activity residues Cys-2103, His-2238, and His-2278. The segment at 2546-2568 (TEEPFAPVQPVIPKPSVDREASG) is disordered. Carrier domains follow at residues 2597 to 2674 (ITAE…AHEL) and 2738 to 2815 (VAIE…KSEL). 2 positions are modified to O-(pantetheine 4'-phosphoryl)serine: Ser-2634 and Ser-2775. The segment at 2828–2854 (SFEAAQQKPAASSHPKPAERPLQPVQH) is disordered. The 422-residue stretch at 2873-3294 (EDAIAIVGMS…GTNAHIVIEE (422 aa)) folds into the Ketosynthase family 3 (KS3) 3 domain. Catalysis depends on for beta-ketoacyl synthase 3 activity residues Cys-3040, His-3175, and His-3215. Positions 3686-3887 (DKVLLITGGT…PNWKETGLGE (202 aa)) are beta-ketoacyl reductase 2. The Carrier 5 domain occupies 3960–4037 (NLFPETVDWL…SFAHWLISKY (78 aa)). At Ser-3997 the chain carries O-(pantetheine 4'-phosphoryl)serine. The Ketosynthase family 3 (KS3) 4 domain maps to 4082–4485 (AEDIAIIGLS…GTNAHLIIEG (404 aa)). Residue Cys-4237 is the For beta-ketoacyl synthase 4 activity of the active site.

Pantetheine 4'-phosphate is required as a cofactor.

The protein localises to the cytoplasm. Its pathway is antibiotic biosynthesis; bacillaene biosynthesis. In terms of biological role, involved in some intermediate steps for the synthesis of the antibiotic polyketide bacillaene which is involved in secondary metabolism. The sequence is that of Polyketide synthase PksL (pksL) from Bacillus subtilis (strain 168).